A 756-amino-acid chain; its full sequence is 1-phosphatidylinositol 4,5-bisphosphate phosphodiesterase delta-1 (756 aa).

The region spanning 21–130 is the PH domain; the sequence is ALLKGSQLLK…WVLGLHKIIH (110 aa). A substrate binding region spans residues 30–57; it reads KVKSSSWRRERFYKLQEDCKTIWQESRK. EF-hand domains lie at 140–175 and 176–211; these read KLQH…LNIQ and VDDS…LTQR. Residues Asp-153, Asn-155, Asp-157, Lys-159, Glu-164, Asp-189, Ser-191, Thr-193, Ser-195, and Glu-200 each contribute to the Ca(2+) site. Ser-191 carries an O-linked (GlcNAc) serine glycan. Thr-193 carries O-linked (GlcNAc) threonine glycosylation. A PI-PLC X-box domain is found at 296–440; it reads QDMGQPLSHY…LKGKILLKGK (145 aa). His-311 is an active-site residue. The Ca(2+) site is built by Asn-312, Glu-341, and Asp-343. His-356 is an active-site residue. Ca(2+) is bound at residue Glu-390. Substrate-binding residues include Lys-438 and Lys-440. Thr-457 bears the Phosphothreonine mark. Ser-460 carries the post-translational modification Phosphoserine. The 118-residue stretch at 492 to 609 folds into the PI-PLC Y-box domain; that stretch reads LSDMVIYCKS…GYVLKPAFLR (118 aa). Substrate is bound by residues Ser-522 and Arg-549. In terms of domain architecture, C2 spans 611-737; the sequence is PNGTFNPRAL…QGYRHVHLMS (127 aa). Ca(2+)-binding residues include Ile-651, Asp-653, Asn-677, Asp-706, Tyr-707, and Asp-708.

As to quaternary structure, interacts with TGM2. The cofactor is Ca(2+). Strongly expressed in lung, liver and heart. Also expressed at least in pancreas, kidney, skeletal muscle, placenta and brain.

The enzyme catalyses a 1,2-diacyl-sn-glycero-3-phospho-(1D-myo-inositol-4,5-bisphosphate) + H2O = 1D-myo-inositol 1,4,5-trisphosphate + a 1,2-diacyl-sn-glycerol + H(+). It catalyses the reaction a 1,2-diacyl-sn-glycero-3-phospho-(1D-myo-inositol) + H2O = 1D-myo-inositol 1-phosphate + a 1,2-diacyl-sn-glycerol + H(+). Functionally, the production of the second messenger molecules diacylglycerol (DAG) and inositol 1,4,5-trisphosphate (IP3) is mediated by activated phosphatidylinositol-specific phospholipase C enzymes. Essential for trophoblast and placental development. Binds phosphatidylinositol 4,5-bisphosphate. This Homo sapiens (Human) protein is 1-phosphatidylinositol 4,5-bisphosphate phosphodiesterase delta-1.